A 242-amino-acid chain; its full sequence is Transcriptional activator protein BjaR1 (242 aa).

Residues 173 to 238 form the HTH luxR-type domain; the sequence is TPYPSTRLTP…HAVALAIRHK (66 aa). Positions 197-216 form a DNA-binding region, H-T-H motif; sequence AWEIGEILHITQRTAEEHLA.

This sequence belongs to the autoinducer-regulated transcriptional regulatory protein family.

Functionally, transcriptional activator that functions in response to the quorum-sensing autoinducer IV-HSL (isovaleryl-homoserine lactone). Activates BjaI expression. Is sensitive to IV-HSL at concentrations as low as 10 pM. In Bradyrhizobium diazoefficiens (strain JCM 10833 / BCRC 13528 / IAM 13628 / NBRC 14792 / USDA 110), this protein is Transcriptional activator protein BjaR1 (bjaR1).